Here is a 225-residue protein sequence, read N- to C-terminus: Putative ATP-dependent Clp protease proteolytic subunit-like (225 aa).

The protein belongs to the peptidase S14 family.

Its function is as follows. Has lost the two conserved residues (Ser and His) proposed to be part of the active site. Therefore it could be inactive. The polypeptide is Putative ATP-dependent Clp protease proteolytic subunit-like (clpR) (Synechocystis sp. (strain ATCC 27184 / PCC 6803 / Kazusa)).